Here is a 228-residue protein sequence, read N- to C-terminus: uncharacterized protein (228 aa).

The first 19 residues, 1–19, serve as a signal peptide directing secretion; sequence MYRYTWLLWWITILLRIQQ. N41, N93, N100, N128, and N164 each carry an N-linked (GlcNAc...) asparagine; by host glycan. A helical transmembrane segment spans residues 189–209; the sequence is MWIIPLVIVTTIIVLICFKFP.

This sequence belongs to the HHV-5 UL9 family.

The protein localises to the host membrane. This is an uncharacterized protein from Homo sapiens (Human).